We begin with the raw amino-acid sequence, 151 residues long: Testis-expressed protein 29 (151 aa).

Topologically, residues 1-56 are extracellular; that stretch reads MEYVLEVKNSPRHLLKQFTVCDVPLYDICDYNVSRDRCQELGCCFYEGVCYKKAVP. The helical transmembrane segment at 57 to 77 threads the bilayer; sequence IYIHVFSALIVIIAGAFVITI. Residues 78–151 lie on the Cytoplasmic side of the membrane; it reads IYRVIQESRK…TITEAEETED (74 aa). The segment at 100–151 is disordered; the sequence is KSSEKAELASSSSKLGLKPASPGPPSAGPSMKSDEDKDDVTGTITEAEETED. The segment covering 107-119 has biased composition (low complexity); it reads LASSSSKLGLKPA.

It is found in the membrane. The protein is Testis-expressed protein 29 (TEX29) of Homo sapiens (Human).